Here is a 276-residue protein sequence, read N- to C-terminus: NAC domain-containing protein 67 (276 aa).

In terms of domain architecture, NAC spans 17-170 (LPPGFRFHPT…DWVLCRLYNK (154 aa)).

Expressed in leaf blades.

The protein resides in the nucleus. Its function is as follows. Probable transcription factor involved in stress response. The protein is NAC domain-containing protein 67 of Oryza sativa subsp. japonica (Rice).